The primary structure comprises 909 residues: GTPase activating protein homolog 4 (909 aa).

Residues 1–257 form the F-BAR domain; that stretch reads MASLIGSAKL…PTPDFQFESC (257 aa). A Rho-GAP domain is found at 322-513; it reads IPIEEIMFKQ…LIIEGYLKLS (192 aa). A disordered region spans residues 529 to 909; it reads IPSFSNNNNN…QRVPPPPSQS (381 aa). 2 stretches are compositionally biased toward low complexity: residues 533–562 and 571–602; these read SNNNNNSTTTTTTTTTTTVPSSTSTNITTN and SSTTPLPSLTTFSQSQSSSPPNQPSPSITPQQ. The segment covering 609–625 has biased composition (pro residues); that stretch reads SYQPPQPPPTMAPPPLF. A compositionally biased stretch (polar residues) spans 651 to 674; that stretch reads QYTQSSSNLPPIQLGVTNSPSKPQ. Positions 672-809 form a coiled coil; the sequence is KPQLSDKQKE…QQLQQQSNGS (138 aa). Positions 675 to 716 are enriched in basic and acidic residues; sequence LSDKQKEKEKEKEKEKEKEKEREKEKEKEKEKEKEKEKEKEK. Positions 723 to 741 are enriched in low complexity; the sequence is SSSTSPNSSSLSISNFLSS. Over residues 742–765 the composition is skewed to basic and acidic residues; it reads NKDKDKEKDKEKEKEKEKEKDKEI. Positions 767 to 785 are enriched in polar residues; sequence ATNSTPEKPVSNRMSLIFS. Composition is skewed to low complexity over residues 786–828 and 843–892; these read QQLQ…MSPS and SGTS…ELKS.

It localises to the cytoplasm. It is found in the contractile vacuole. Functionally, rho GTPase-activating protein involved in the signal transduction pathway. The polypeptide is GTPase activating protein homolog 4 (mgp4) (Dictyostelium discoideum (Social amoeba)).